Consider the following 537-residue polypeptide: ATP synthase subunit alpha (537 aa).

171-178 contacts ATP; that stretch reads GDRQTGKT.

This sequence belongs to the ATPase alpha/beta chains family. F-type ATPases have 2 components, CF(1) - the catalytic core - and CF(0) - the membrane proton channel. CF(1) has five subunits: alpha(3), beta(3), gamma(1), delta(1), epsilon(1). CF(0) has four main subunits: a, b, b' and c.

Its subcellular location is the cell inner membrane. It catalyses the reaction ATP + H2O + 4 H(+)(in) = ADP + phosphate + 5 H(+)(out). Produces ATP from ADP in the presence of a proton gradient across the membrane. The alpha chain is a regulatory subunit. This is ATP synthase subunit alpha from Chloroherpeton thalassium (strain ATCC 35110 / GB-78).